We begin with the raw amino-acid sequence, 146 residues long: Phospholipase A2, membrane associated (146 aa).

The signal sequence occupies residues methionine 1 to glycine 21. Disulfide bonds link cysteine 47–cysteine 139, cysteine 49–cysteine 65, cysteine 64–cysteine 119, cysteine 70–cysteine 146, cysteine 71–cysteine 112, cysteine 80–cysteine 105, and cysteine 98–cysteine 110. 3 residues coordinate Ca(2+): histidine 48, glycine 50, and glycine 52. Residue histidine 68 is part of the active site. Position 69 (aspartate 69) interacts with Ca(2+). Aspartate 113 is a catalytic residue.

It belongs to the phospholipase A2 family. Ca(2+) serves as cofactor. In terms of tissue distribution, mainly in the Paneth cells adjacent to the stem population in the small intestines.

It is found in the secreted. It localises to the cell membrane. Its subcellular location is the mitochondrion outer membrane. It carries out the reaction a 1,2-diacyl-sn-glycero-3-phosphoethanolamine + H2O = a 1-acyl-sn-glycero-3-phosphoethanolamine + a fatty acid + H(+). It catalyses the reaction 1-hexadecanoyl-2-(9Z-octadecenoyl)-sn-glycero-3-phosphoethanolamine + H2O = 1-hexadecanoyl-sn-glycero-3-phosphoethanolamine + (9Z)-octadecenoate + H(+). The enzyme catalyses 1-hexadecanoyl-2-(9Z,12Z-octadecadienoyl)-sn-glycero-3-phosphoethanolamine + H2O = 1-hexadecanoyl-sn-glycero-3-phosphoethanolamine + (9Z,12Z)-octadecadienoate + H(+). The catalysed reaction is 1-hexadecanoyl-2-(5Z,8Z,11Z,14Z-eicosatetraenoyl)-sn-glycero-3-phosphoethanolamine + H2O = 1-hexadecanoyl-sn-glycero-3-phosphoethanolamine + (5Z,8Z,11Z,14Z)-eicosatetraenoate + H(+). It carries out the reaction N-hexadecanoyl-1,2-di-(9Z-octadecenoyl)-sn-glycero-3-phosphoethanolamine + H2O = N-hexadecanoyl-1-(9Z-octadecenoyl)-sn-glycero-3-phosphoethanolamine + (9Z)-octadecenoate + H(+). It catalyses the reaction 1,2-dihexadecanoyl-sn-glycero-3-phospho-(1'-sn-glycerol) + H2O = 1-hexadecanoyl-sn-glycero-3-phospho-(1'-sn-glycerol) + hexadecanoate + H(+). The enzyme catalyses 1-hexadecanoyl-2-(9Z-octadecenoyl)-sn-glycero-3-phosphoglycerol + H2O = 1-hexadecanoyl-sn-glycero-3-phosphoglycerol + (9Z)-octadecenoate + H(+). The catalysed reaction is 1-hexadecanoyl-2-(9Z-octadecenoyl)-sn-glycero-3-phospho-(1'-sn-glycerol) + H2O = 1-hexadecanoyl-sn-glycero-3-phospho-(1'-sn-glycerol) + (9Z)-octadecenoate + H(+). It carries out the reaction a 1,2-diacyl-sn-glycero-3-phosphocholine + H2O = a 1-acyl-sn-glycero-3-phosphocholine + a fatty acid + H(+). It catalyses the reaction 1,2-dihexadecanoyl-sn-glycero-3-phosphocholine + H2O = 1-hexadecanoyl-sn-glycero-3-phosphocholine + hexadecanoate + H(+). The enzyme catalyses 1-hexadecanoyl-2-(9Z-octadecenoyl)-sn-glycero-3-phosphocholine + H2O = 1-hexadecanoyl-sn-glycero-3-phosphocholine + (9Z)-octadecenoate + H(+). The catalysed reaction is 1-hexadecanoyl-2-(9Z,12Z-octadecadienoyl)-sn-glycero-3-phosphocholine + H2O = (9Z,12Z)-octadecadienoate + 1-hexadecanoyl-sn-glycero-3-phosphocholine + H(+). It carries out the reaction 1-hexadecanoyl-2-(4Z,7Z,10Z,13Z,16Z,19Z-docosahexaenoyl)-sn-glycero-3-phosphocholine + H2O = (4Z,7Z,10Z,13Z,16Z,19Z)-docosahexaenoate + 1-hexadecanoyl-sn-glycero-3-phosphocholine + H(+). Its function is as follows. Secretory calcium-dependent phospholipase A2 that primarily targets extracellular phospholipids with implications in host antimicrobial defense, inflammatory response and tissue regeneration. Hydrolyzes the ester bond of the fatty acyl group attached at sn-2 position of phospholipids (phospholipase A2 activity) with preference for phosphatidylethanolamines and phosphatidylglycerols over phosphatidylcholines. Contributes to lipid remodeling of cellular membranes and generation of lipid mediators involved in pathogen clearance. Displays bactericidal activity against Gram-positive bacteria by directly hydrolyzing phospholipids of the bacterial membrane. Upon sterile inflammation, targets membrane phospholipids of extracellular mitochondria released from activated platelets, generating free unsaturated fatty acids such as arachidonate that is used by neighboring leukocytes to synthesize inflammatory eicosanoids such as leukotrienes. Simultaneously, by compromising mitochondrial membrane integrity, promotes the release in circulation of potent damage-associated molecular pattern molecules that activate the innate immune response. Plays a stem cell regulator role in the intestinal crypt. Within intracellular compartment mediates Paneth cell differentiation and its stem cell supporting functions by inhibiting Wnt signaling pathway in intestinal stem cell (ICS). Secreted in the intestinal lumen upon inflammation, acts in an autocrine way and promotes prostaglandin E2 synthesis that stimulates Wnt signaling pathway in ICS cells and tissue regeneration. May play a role in the biosynthesis of N-acyl ethanolamines that regulate energy metabolism and inflammation. Hydrolyzes N-acyl phosphatidylethanolamines to N-acyl lysophosphatidylethanolamines, which are further cleaved by a lysophospholipase D to release N-acyl ethanolamines. Independent of its catalytic activity, acts as a ligand for integrins. Binds to and activates integrins ITGAV:ITGB3, ITGA4:ITGB1 and ITGA5:ITGB1. Binds to a site (site 2) which is distinct from the classical ligand-binding site (site 1) and induces integrin conformational changes and enhanced ligand binding to site 1. Induces cell proliferation in an integrin-dependent manner. This is Phospholipase A2, membrane associated (Pla2g2a) from Mus musculus (Mouse).